A 234-amino-acid polypeptide reads, in one-letter code: Peroxiredoxin (234 aa).

Residues 6-161 (PLIGEKLPEM…ILRLLKALQV (156 aa)) enclose the Thioredoxin domain. Residue C48 is the Cysteine sulfenic acid (-SOH) intermediate of the active site. R124 is a substrate binding site. A disulfide bridge links C203 with C209.

It belongs to the peroxiredoxin family. Prx6 subfamily. In terms of assembly, homodecamer. Pentamer of dimers that assemble into a ring structure.

Its subcellular location is the cytoplasm. It carries out the reaction a hydroperoxide + [thioredoxin]-dithiol = an alcohol + [thioredoxin]-disulfide + H2O. In terms of biological role, thiol-specific peroxidase that catalyzes the reduction of hydrogen peroxide and organic hydroperoxides to water and alcohols, respectively. Plays a role in cell protection against oxidative stress by detoxifying peroxides. In Ignicoccus hospitalis (strain KIN4/I / DSM 18386 / JCM 14125), this protein is Peroxiredoxin.